Consider the following 644-residue polypeptide: Exoribonuclease 2 (644 aa).

An RNB domain is found at 189–516 (RQDLTALNFV…NHRLLKAVIK (328 aa)). Residues 561 to 643 (NTRFAAEIID…ETRSIIARPA (83 aa)) enclose the S1 motif domain.

This sequence belongs to the RNR ribonuclease family. RNase II subfamily.

The protein resides in the cytoplasm. It carries out the reaction Exonucleolytic cleavage in the 3'- to 5'-direction to yield nucleoside 5'-phosphates.. In terms of biological role, involved in mRNA degradation. Hydrolyzes single-stranded polyribonucleotides processively in the 3' to 5' direction. This chain is Exoribonuclease 2, found in Salmonella typhi.